The primary structure comprises 435 residues: Serine--tRNA ligase (435 aa).

Residue 242 to 244 (TAE) coordinates L-serine. Residue 273-275 (RSE) participates in ATP binding. Residue Glu-296 participates in L-serine binding. 360–363 (EISS) serves as a coordination point for ATP. Residue Ser-396 coordinates L-serine.

It belongs to the class-II aminoacyl-tRNA synthetase family. Type-1 seryl-tRNA synthetase subfamily. Homodimer. The tRNA molecule binds across the dimer.

The protein localises to the cytoplasm. It carries out the reaction tRNA(Ser) + L-serine + ATP = L-seryl-tRNA(Ser) + AMP + diphosphate + H(+). The enzyme catalyses tRNA(Sec) + L-serine + ATP = L-seryl-tRNA(Sec) + AMP + diphosphate + H(+). The protein operates within aminoacyl-tRNA biosynthesis; selenocysteinyl-tRNA(Sec) biosynthesis; L-seryl-tRNA(Sec) from L-serine and tRNA(Sec): step 1/1. Functionally, catalyzes the attachment of serine to tRNA(Ser). Is also able to aminoacylate tRNA(Sec) with serine, to form the misacylated tRNA L-seryl-tRNA(Sec), which will be further converted into selenocysteinyl-tRNA(Sec). This chain is Serine--tRNA ligase, found in Vibrio vulnificus (strain CMCP6).